Here is a 64-residue protein sequence, read N- to C-terminus: Large ribosomal subunit protein bL35 (64 aa).

The span at 1 to 28 shows a compositional bias: basic residues; that stretch reads MSKAKTHSGAAKRFKKTASGYKHKHAFK. The disordered stretch occupies residues 1–51; it reads MSKAKTHSGAAKRFKKTASGYKHKHAFKSHILTKMTTKRKRQLRGTSLLNA.

Belongs to the bacterial ribosomal protein bL35 family.

This is Large ribosomal subunit protein bL35 from Saccharophagus degradans (strain 2-40 / ATCC 43961 / DSM 17024).